The following is a 353-amino-acid chain: 4-hydroxy-2-oxovalerate aldolase 2 (353 aa).

The 253-residue stretch at 14–266 folds into the Pyruvate carboxyltransferase domain; the sequence is VRMTDTSLRD…KTGIDFFDIA (253 aa). 22–23 serves as a coordination point for substrate; sequence RD. Mn(2+) is bound at residue Asp23. The Proton acceptor role is filled by His26. 2 residues coordinate substrate: Ser176 and His205. Positions 205 and 207 each coordinate Mn(2+). Tyr296 provides a ligand contact to substrate.

It belongs to the 4-hydroxy-2-oxovalerate aldolase family.

It carries out the reaction (S)-4-hydroxy-2-oxopentanoate = acetaldehyde + pyruvate. This is 4-hydroxy-2-oxovalerate aldolase 2 from Mycobacterium sp. (strain JLS).